A 497-amino-acid chain; its full sequence is Serine/threonine-protein phosphatase 2A 56 kDa regulatory subunit beta isoform (497 aa).

Positions Met1–Leu19 are enriched in low complexity. 2 disordered regions span residues Met1 to Asn55 and Gln473 to Ser497. A phosphoserine mark is found at Ser32, Ser35, Ser44, Ser46, Ser47, and Ser48. Over residues Arg34 to His45 the composition is skewed to basic residues.

This sequence belongs to the phosphatase 2A regulatory subunit B56 family. As to quaternary structure, component of the serine/threonine-protein phosphatase 2A complex (PP2A). This complex consists of a common heterodimeric core enzyme, composed of a 36 kDa catalytic subunit (subunit C) and a 65 kDa constant scaffold subunit (PR65 or subunit A), that associates with a variety of regulatory subunits. Proteins that associate with the core dimer include three families of regulatory subunits B (the R2/B/PR55/B55, R3/B''/PR72/PR130/PR59 and R5/B'/B56 families), the 48 kDa variable regulatory subunit, viral proteins, and cell signaling molecules. Interacts with SGO1. Interacts with AKT1. Ubiquitinated by CUL3-KLHL15 complex; this modification leads to proteasomal degradation. Widely expressed at the mRNA level, with highest levels in cerebellum and lung.

Its subcellular location is the cytoplasm. Its function is as follows. As the regulatory component of the serine/threonine-protein phosphatase 2A (PP2A) holoenzyme, modulates substrate specificity, subcellular localization, and responsiveness to phosphorylation. The phosphorylated form mediates the interaction between PP2A and AKT1, leading to AKT1 dephosphorylation. This chain is Serine/threonine-protein phosphatase 2A 56 kDa regulatory subunit beta isoform (Ppp2r5b), found in Rattus norvegicus (Rat).